The following is a 332-amino-acid chain: RING finger protein 225 (332 aa).

The segment at 1-55 is disordered; that stretch reads MPCPRLPWLRRHRTSQGSGPSSPSTVSAPNSPSRGEDEDAEEEEGDGTPGSGPIL. Positions 15 to 27 are enriched in low complexity; sequence SQGSGPSSPSTVS. Over residues 36-46 the composition is skewed to acidic residues; sequence EDEDAEEEEGD. Residues 63–111 form an RING-type zinc finger; sequence CLICVSPFDGIFKLPKRLDCGHVFCLECLARLSLATAGGGDAVACPMCR. The segment at 121–187 is disordered; that stretch reads GLPALPTQPG…PPPLRLGRPL (67 aa). The helical transmembrane segment at 205 to 225 threads the bilayer; the sequence is ALAVLVAAGLVVSGVYIFFLI. The tract at residues 259–332 is disordered; the sequence is THAWTRRPTK…ADGKKVQLQQ (74 aa). Basic and acidic residues-rich tracts occupy residues 280 to 295 and 323 to 332; these read ATKD…KDPV and ADGKKVQLQQ.

It is found in the membrane. This chain is RING finger protein 225, found in Mus musculus (Mouse).